Consider the following 294-residue polypeptide: N-acetylmuramic acid 6-phosphate etherase (294 aa).

Residues Thr-56–Lys-219 enclose the SIS domain. Glu-84 functions as the Proton donor in the catalytic mechanism. Residue Glu-115 is part of the active site.

It belongs to the GCKR-like family. MurNAc-6-P etherase subfamily. As to quaternary structure, homodimer.

The enzyme catalyses N-acetyl-D-muramate 6-phosphate + H2O = N-acetyl-D-glucosamine 6-phosphate + (R)-lactate. Its pathway is amino-sugar metabolism; 1,6-anhydro-N-acetylmuramate degradation. It participates in amino-sugar metabolism; N-acetylmuramate degradation. The protein operates within cell wall biogenesis; peptidoglycan recycling. In terms of biological role, specifically catalyzes the cleavage of the D-lactyl ether substituent of MurNAc 6-phosphate, producing GlcNAc 6-phosphate and D-lactate. Together with AnmK, is also required for the utilization of anhydro-N-acetylmuramic acid (anhMurNAc) either imported from the medium or derived from its own cell wall murein, and thus plays a role in cell wall recycling. This chain is N-acetylmuramic acid 6-phosphate etherase, found in Francisella tularensis subsp. novicida (strain U112).